We begin with the raw amino-acid sequence, 205 residues long: Golgi apparatus membrane protein TVP23 homolog B (205 aa).

The residue at position 1 (methionine 1) is an N-acetylmethionine. The tract at residues 1-21 (MLQQDSNDDTEDVSLFDAEEE) is disordered. Transmembrane regions (helical) follow at residues 34–53 (PVAS…VYLL), 54–72 (CGLL…ILLL), 126–146 (IFWL…FSAL), and 152–172 (KWLA…YGYI).

It belongs to the TVP23 family.

It is found in the membrane. The protein is Golgi apparatus membrane protein TVP23 homolog B (TVP23B) of Homo sapiens (Human).